A 197-amino-acid chain; its full sequence is MTSLYLASGSPRRQELLAQLGVTFERIVTGIEEQRQPQESAQQYVVRLACEKAQAGVAQTAQDLPVLGADTIVILNGEVLEKPRDAEHAAQMLRKLSGQTHQVMTAVALADSQHILDCLVVTDVTFRTLTDEDIAGYVASGEPLDKAGAYGIQGLGGCFVRKINGSYHAVVGLPLVETYELLSNFNALREKRDKHDG.

Residue aspartate 70 is the Proton acceptor of the active site.

Belongs to the Maf family. YhdE subfamily. The cofactor is a divalent metal cation.

The protein resides in the cytoplasm. It carries out the reaction dTTP + H2O = dTMP + diphosphate + H(+). It catalyses the reaction UTP + H2O = UMP + diphosphate + H(+). Functionally, nucleoside triphosphate pyrophosphatase that hydrolyzes dTTP and UTP. May have a dual role in cell division arrest and in preventing the incorporation of modified nucleotides into cellular nucleic acids. This is dTTP/UTP pyrophosphatase (yceF) from Shigella dysenteriae serotype 1 (strain Sd197).